The chain runs to 310 residues: Methionyl-tRNA formyltransferase (310 aa).

111–114 (SLLP) provides a ligand contact to (6S)-5,6,7,8-tetrahydrofolate.

Belongs to the Fmt family.

The catalysed reaction is L-methionyl-tRNA(fMet) + (6R)-10-formyltetrahydrofolate = N-formyl-L-methionyl-tRNA(fMet) + (6S)-5,6,7,8-tetrahydrofolate + H(+). Its function is as follows. Attaches a formyl group to the free amino group of methionyl-tRNA(fMet). The formyl group appears to play a dual role in the initiator identity of N-formylmethionyl-tRNA by promoting its recognition by IF2 and preventing the misappropriation of this tRNA by the elongation apparatus. This is Methionyl-tRNA formyltransferase from Afipia carboxidovorans (strain ATCC 49405 / DSM 1227 / KCTC 32145 / OM5) (Oligotropha carboxidovorans).